Consider the following 288-residue polypeptide: Large ribosomal subunit protein uL2 (288 aa).

2 disordered regions span residues 1–46 (MAIH…RNVY) and 226–288 (MVMN…RGKK). Gly residues predominate over residues 235–248 (NGGGQGKSKGGGGR). Residues 279-288 (HNGRKPRGKK) are compositionally biased toward basic residues.

It belongs to the universal ribosomal protein uL2 family. Part of the 50S ribosomal subunit. Forms a bridge to the 30S subunit in the 70S ribosome.

One of the primary rRNA binding proteins. Required for association of the 30S and 50S subunits to form the 70S ribosome, for tRNA binding and peptide bond formation. It has been suggested to have peptidyltransferase activity; this is somewhat controversial. Makes several contacts with the 16S rRNA in the 70S ribosome. In Opitutus terrae (strain DSM 11246 / JCM 15787 / PB90-1), this protein is Large ribosomal subunit protein uL2.